Consider the following 525-residue polypeptide: Nucleolar and spindle-associated protein 1-A (525 aa).

Disordered regions lie at residues 46–205 (ESKD…LHEA), 248–292 (EKTP…RFSA), 373–397 (TPES…PEKA), and 451–525 (SLSR…VPVQ). Positions 58 to 69 (SSLTDTDELNSS) are enriched in polar residues. Basic residues predominate over residues 82-92 (THRRGRGRKPL). Over residues 106–127 (SVGTGTESLASETDNTQDQNCL) the composition is skewed to polar residues. Positions 160–169 (TTEKRQKKAS) are enriched in basic and acidic residues. The span at 270–285 (PPTTGASPSRTPTNQR) shows a compositional bias: polar residues. Positions 476 to 494 (CGSNNNVSVLKNNFKQPHL) are enriched in polar residues. The segment covering 495 to 514 (QTREDRRKQHEQDRKGKRDQ) has biased composition (basic and acidic residues).

The protein belongs to the NUSAP family. As to quaternary structure, interacts with DNA. Interacts with microtubules, ipo7, kpna2 and kpnb1. Microtubule stabilization is inhibited by ipo7 and kpna2, while microtubule bundling is inhibited by kpnb1. Active GTP-bound ran causes dissociation of ipo7 and kpnb1.

It is found in the cytoplasm. It localises to the nucleus. The protein resides in the cytoskeleton. The protein localises to the spindle. Microtubule-associated protein with the capacity to bundle and stabilize microtubules. May associate with chromosomes and promote the organization of meiotic or mitotic spindle microtubules around them. The sequence is that of Nucleolar and spindle-associated protein 1-A (nusap1-a) from Xenopus laevis (African clawed frog).